Reading from the N-terminus, the 380-residue chain is Probable G-protein coupled receptor 132 (380 aa).

Residues 1–45 (MCPMLLKNGYNGNATPVTTTAPWASLGLSAKTCNNVSFEESRIVL) lie on the Extracellular side of the membrane. N-linked (GlcNAc...) asparagine glycosylation is present at Asn35. A helical membrane pass occupies residues 46 to 68 (VVVYSAVCTLGVPANCLTAWLAL). The Cytoplasmic segment spans residues 69 to 79 (LQVLQGNVLAV). A helical membrane pass occupies residues 80-102 (YLLCLALCELLYTGTLPLWVIYI). Over 103 to 116 (RNQHRWTLGLLACK) the chain is Extracellular. Residues Cys115 and Cys186 are joined by a disulfide bond. The helical transmembrane segment at 117-138 (VTAYIFFCNIYVSILFLCCISC) threads the bilayer. Topologically, residues 139-158 (DRFVAVVYALESRGRRRRRT) are cytoplasmic. Residues 159 to 178 (AILISACIFILVGIVHYPVF) traverse the membrane as a helical segment. Residues 179-197 (QTEDKETCFDMLQMDSRIA) lie on the Extracellular side of the membrane. The helical transmembrane segment at 198–220 (GYYYARFTVGFAIPLSIIAFTNH) threads the bilayer. At 221–246 (RIFRSIKQSMGLSAAQKAKVKHSAIA) the chain is on the cytoplasmic side. Residues 247–269 (VVVIFLVCFAPYHLVLLVKAAAF) form a helical membrane-spanning segment. The Extracellular portion of the chain corresponds to 270–288 (SYYRGDRNAMCGLEERLYT). The helical transmembrane segment at 289–311 (ASVVFLCLSTVNGVADPIIYVLA) threads the bilayer. Residues 312–380 (TDHSRQEVSR…PAKRLIEESC (69 aa)) are Cytoplasmic-facing.

The protein belongs to the G-protein coupled receptor 1 family. In terms of tissue distribution, highly expressed in macrophages and hematopoietic tissues rich in lymphocytes, like spleen and thymus. Weakly expressed in heart and lung. In atherosclerotic plaques, expression is observed around the lipid core and at the shoulder region.

It localises to the cell membrane. May be a receptor for oxidized free fatty acids derived from linoleic and arachidonic acids such as 9-hydroxyoctadecadienoic acid (9-HODE). Activates a G alpha protein, most likely G alpha(q). May be involved in apoptosis. Functions at the G2/M checkpoint to delay mitosis. May function as a sensor that monitors the oxidative states and mediates appropriate cellular responses such as secretion of paracrine signals and attenuation of proliferation. May mediate ths accumulation of intracellular inositol phosphates at acidic pH through proton-sensing activity. The chain is Probable G-protein coupled receptor 132 (GPR132) from Homo sapiens (Human).